A 217-amino-acid chain; its full sequence is Adenylate kinase (217 aa).

10-15 contributes to the ATP binding site; sequence GAGKGT. Residues 30–59 are NMP; sequence STGDIFRSNVSQGTPLGVQAKRYMDAGELV. Residues Thr-31, Arg-36, 57–59, 85–88, and Gln-92 each bind AMP; these read ELV and GFPR. An LID region spans residues 126–163; that stretch reads GRRTCRGCGKVWHVEFDAPSQEGRCDRCGAELFQRDDD. Arg-127 serves as a coordination point for ATP. Residues Cys-130, Cys-133, Cys-150, and Cys-153 each contribute to the Zn(2+) site. AMP is bound by residues Arg-160 and Arg-171. Gly-199 contributes to the ATP binding site.

This sequence belongs to the adenylate kinase family. In terms of assembly, monomer.

The protein localises to the cytoplasm. It catalyses the reaction AMP + ATP = 2 ADP. Its pathway is purine metabolism; AMP biosynthesis via salvage pathway; AMP from ADP: step 1/1. Its function is as follows. Catalyzes the reversible transfer of the terminal phosphate group between ATP and AMP. Plays an important role in cellular energy homeostasis and in adenine nucleotide metabolism. In Salinispora tropica (strain ATCC BAA-916 / DSM 44818 / JCM 13857 / NBRC 105044 / CNB-440), this protein is Adenylate kinase.